The chain runs to 189 residues: Peptidyl-tRNA hydrolase (189 aa).

Tyr16 is a tRNA binding site. His21 (proton acceptor) is an active-site residue. Positions 67, 69, and 115 each coordinate tRNA.

It belongs to the PTH family. In terms of assembly, monomer.

Its subcellular location is the cytoplasm. The enzyme catalyses an N-acyl-L-alpha-aminoacyl-tRNA + H2O = an N-acyl-L-amino acid + a tRNA + H(+). Its function is as follows. Hydrolyzes ribosome-free peptidyl-tRNAs (with 1 or more amino acids incorporated), which drop off the ribosome during protein synthesis, or as a result of ribosome stalling. Functionally, catalyzes the release of premature peptidyl moieties from peptidyl-tRNA molecules trapped in stalled 50S ribosomal subunits, and thus maintains levels of free tRNAs and 50S ribosomes. This chain is Peptidyl-tRNA hydrolase, found in Legionella pneumophila subsp. pneumophila (strain Philadelphia 1 / ATCC 33152 / DSM 7513).